A 920-amino-acid polypeptide reads, in one-letter code: GTPase activating protein homolog 1 (920 aa).

The segment covering 65–87 (NLGGLSNDSTNNNSNSNNTIDSS) has biased composition (low complexity). Residues 65–91 (NLGGLSNDSTNNNSNSNNTIDSSKPLS) are disordered. Positions 90–344 (LSFENDMSDG…FVDIIDPEVD (255 aa)) constitute an F-BAR domain. Residues 184 to 276 (LNEAIKDMEK…EDEYKEQINE (93 aa)) adopt a coiled-coil conformation. The span at 403-449 (TNTITSQSGSTIISNGASQPIEIPSPQPISEQQQIPPQQQQQQQQAQ) shows a compositional bias: low complexity. Disordered regions lie at residues 403-468 (TNTI…PMGR) and 490-518 (STSS…LSKS). Positions 450–468 (VPPTSINQSSSPPVNPMGR) are enriched in polar residues. The segment covering 490–513 (STSSLLTKDGNSTTSSNTSTSNSN) has biased composition (low complexity). The Rho-GAP domain occupies 533-716 (VELEVLIEND…NMIIDSLETK (184 aa)). The tract at residues 727 to 836 (PIIPDDENSD…VSSNGNNINS (110 aa)) is disordered. Residues 730-741 (PDDENSDDDDDD) show a composition bias toward acidic residues. A compositionally biased stretch (low complexity) spans 757–836 (NDINTTNINN…VSSNGNNINS (80 aa)).

It localises to the cytoplasm. Its subcellular location is the contractile vacuole. Rho GTPase-activating protein involved in the signal transduction pathway. Regulator of the contractile vacuole network as well as involved in driving vacuole emptying. The sequence is that of GTPase activating protein homolog 1 (mgp1) from Dictyostelium discoideum (Social amoeba).